The following is a 143-amino-acid chain: NADH-quinone oxidoreductase subunit A (143 aa).

The next 3 membrane-spanning stretches (helical) occupy residues 8 to 28 (FGNVFVFLLLGVVFVAGGYLT), 63 to 83 (FYVVALIFIIFDVEVVFLFPW), and 93 to 113 (FALIEALVFAGILILGLVYAW).

This sequence belongs to the complex I subunit 3 family. NDH-1 is composed of 14 different subunits. Subunits NuoA, H, J, K, L, M, N constitute the membrane sector of the complex.

It is found in the cell inner membrane. The enzyme catalyses a quinone + NADH + 5 H(+)(in) = a quinol + NAD(+) + 4 H(+)(out). Functionally, NDH-1 shuttles electrons from NADH, via FMN and iron-sulfur (Fe-S) centers, to quinones in the respiratory chain. The immediate electron acceptor for the enzyme in this species is believed to be a menaquinone. Couples the redox reaction to proton translocation (for every two electrons transferred, four hydrogen ions are translocated across the cytoplasmic membrane), and thus conserves the redox energy in a proton gradient. This Chlorobium luteolum (strain DSM 273 / BCRC 81028 / 2530) (Pelodictyon luteolum) protein is NADH-quinone oxidoreductase subunit A.